The following is a 124-amino-acid chain: Small ribosomal subunit protein bS6 (124 aa).

This sequence belongs to the bacterial ribosomal protein bS6 family.

In terms of biological role, binds together with bS18 to 16S ribosomal RNA. This chain is Small ribosomal subunit protein bS6, found in Actinobacillus pleuropneumoniae serotype 7 (strain AP76).